A 111-amino-acid chain; its full sequence is Dynein light chain Tctex-type (111 aa).

The protein belongs to the dynein light chain Tctex-type family. The cytoplasmic dynein complex consists of two catalytic heavy chains (HCs) and a number of non-catalytic subunits presented by intermediate chains (ICs), light intermediate chains (LICs) and light chains (LCs).

It localises to the cytoplasm. Its subcellular location is the cytoskeleton. Its function is as follows. Acts as one of several non-catalytic accessory components of the cytoplasmic dynein complex that are thought to be involved in linking dynein to cargos and to adapter proteins that regulate dynein function. Cytoplasmic dynein acts as a motor for the intracellular retrograde motility of vesicles and organelles along microtubules. Required for spermatid differentiation. Is not required for polarized transport in rhabdomere development and appears to be a non-essential component of the cytoplasmic dynein complex. In Drosophila melanogaster (Fruit fly), this protein is Dynein light chain Tctex-type (Dlc90F).